Consider the following 288-residue polypeptide: ATP synthase gamma chain (288 aa).

Belongs to the ATPase gamma chain family. In terms of assembly, F-type ATPases have 2 components, CF(1) - the catalytic core - and CF(0) - the membrane proton channel. CF(1) has five subunits: alpha(3), beta(3), gamma(1), delta(1), epsilon(1). CF(0) has three main subunits: a, b and c.

The protein localises to the cell inner membrane. Produces ATP from ADP in the presence of a proton gradient across the membrane. The gamma chain is believed to be important in regulating ATPase activity and the flow of protons through the CF(0) complex. The protein is ATP synthase gamma chain of Actinobacillus pleuropneumoniae serotype 3 (strain JL03).